The primary structure comprises 110 residues: NADH-quinone oxidoreductase subunit K (110 aa).

A run of 3 helical transmembrane segments spans residues 13 to 33 (LNHY…GLFM), 41 to 61 (ILMS…AFSI), and 73 to 93 (IIIL…LLIY).

It belongs to the complex I subunit 4L family. As to quaternary structure, NDH-1 is composed of 14 different subunits. Subunits NuoA, H, J, K, L, M, N constitute the membrane sector of the complex.

It localises to the cell inner membrane. It carries out the reaction a quinone + NADH + 5 H(+)(in) = a quinol + NAD(+) + 4 H(+)(out). NDH-1 shuttles electrons from NADH, via FMN and iron-sulfur (Fe-S) centers, to quinones in the respiratory chain. The immediate electron acceptor for the enzyme in this species is believed to be ubiquinone. Couples the redox reaction to proton translocation (for every two electrons transferred, four hydrogen ions are translocated across the cytoplasmic membrane), and thus conserves the redox energy in a proton gradient. The sequence is that of NADH-quinone oxidoreductase subunit K from Rickettsia felis (strain ATCC VR-1525 / URRWXCal2) (Rickettsia azadi).